A 297-amino-acid polypeptide reads, in one-letter code: tRNA uridine(34) hydroxylase (297 aa).

The region spanning 133–228 (SGDEVVFFDG…YGETFKDQGL (96 aa)) is the Rhodanese domain. The active-site Cysteine persulfide intermediate is C188.

This sequence belongs to the TrhO family.

It carries out the reaction uridine(34) in tRNA + AH2 + O2 = 5-hydroxyuridine(34) in tRNA + A + H2O. Its function is as follows. Catalyzes oxygen-dependent 5-hydroxyuridine (ho5U) modification at position 34 in tRNAs. In Pseudarthrobacter chlorophenolicus (strain ATCC 700700 / DSM 12829 / CIP 107037 / JCM 12360 / KCTC 9906 / NCIMB 13794 / A6) (Arthrobacter chlorophenolicus), this protein is tRNA uridine(34) hydroxylase.